The chain runs to 127 residues: Fluoride-specific ion channel FluC (127 aa).

4 helical membrane-spanning segments follow: residues 4 to 24 (FTLLGFIALGGAFGACSRYLI), 35 to 55 (GFPYGTLTVNVIGSLLMGILM), 71 to 91 (IIGLGFLGALTTFSTFSMDNV), and 99 to 119 (FIKAGLNILLNVALSITACFI). Residues Gly78 and Thr81 each contribute to the Na(+) site.

It belongs to the fluoride channel Fluc/FEX (TC 1.A.43) family.

Its subcellular location is the cell inner membrane. The catalysed reaction is fluoride(in) = fluoride(out). Its activity is regulated as follows. Na(+) is not transported, but it plays an essential structural role and its presence is essential for fluoride channel function. Fluoride-specific ion channel. Important for reducing fluoride concentration in the cell, thus reducing its toxicity. The chain is Fluoride-specific ion channel FluC from Photobacterium profundum (strain SS9).